A 68-amino-acid chain; its full sequence is Adipokinetic prohormone type 1 (68 aa).

The N-terminal stretch at 1 to 20 (MNYVSIFVLIVACLCVLADA) is a signal peptide. Glutamine 21 carries the post-translational modification Pyrrolidone carboxylic acid. Glycine 30 is subject to Glycine amide. The propeptide occupies 34-68 (GAVAATMSCRSEETIAAIYKLIQNEAERLLLCQKP).

In terms of tissue distribution, expressed in antennal lobe (AL), corpora cardiaca (CC), corpora allata (CA) and gnathal ganglion (GNG) (at protein level). Expression in CC and CA detected in all animals, expression in GNG in some animals and in AL in few animals (at protein level).

The protein localises to the secreted. Its function is as follows. This hormone, released from cells in the corpora cardiaca, causes release of diglycerides from the fat body and stimulation of muscles to use these diglycerides as an energy source during energy-demanding processes. This Agrotis ipsilon (Black cutworm moth) protein is Adipokinetic prohormone type 1.